The sequence spans 348 residues: 4-hydroxy-3-methylbut-2-enyl diphosphate reductase (348 aa).

Cysteine 21 serves as a coordination point for [4Fe-4S] cluster. (2E)-4-hydroxy-3-methylbut-2-enyl diphosphate is bound by residues histidine 50 and histidine 86. Histidine 50 and histidine 86 together coordinate dimethylallyl diphosphate. 2 residues coordinate isopentenyl diphosphate: histidine 50 and histidine 86. Cysteine 108 is a [4Fe-4S] cluster binding site. Residue histidine 136 coordinates (2E)-4-hydroxy-3-methylbut-2-enyl diphosphate. A dimethylallyl diphosphate-binding site is contributed by histidine 136. Histidine 136 is an isopentenyl diphosphate binding site. Glutamate 138 (proton donor) is an active-site residue. Threonine 177 is a binding site for (2E)-4-hydroxy-3-methylbut-2-enyl diphosphate. Cysteine 207 serves as a coordination point for [4Fe-4S] cluster. (2E)-4-hydroxy-3-methylbut-2-enyl diphosphate contacts are provided by serine 235, serine 236, asparagine 237, and serine 280. Dimethylallyl diphosphate is bound by residues serine 235, serine 236, asparagine 237, and serine 280. Positions 235, 236, 237, and 280 each coordinate isopentenyl diphosphate.

Belongs to the IspH family. Requires [4Fe-4S] cluster as cofactor.

The catalysed reaction is isopentenyl diphosphate + 2 oxidized [2Fe-2S]-[ferredoxin] + H2O = (2E)-4-hydroxy-3-methylbut-2-enyl diphosphate + 2 reduced [2Fe-2S]-[ferredoxin] + 2 H(+). It catalyses the reaction dimethylallyl diphosphate + 2 oxidized [2Fe-2S]-[ferredoxin] + H2O = (2E)-4-hydroxy-3-methylbut-2-enyl diphosphate + 2 reduced [2Fe-2S]-[ferredoxin] + 2 H(+). It participates in isoprenoid biosynthesis; dimethylallyl diphosphate biosynthesis; dimethylallyl diphosphate from (2E)-4-hydroxy-3-methylbutenyl diphosphate: step 1/1. The protein operates within isoprenoid biosynthesis; isopentenyl diphosphate biosynthesis via DXP pathway; isopentenyl diphosphate from 1-deoxy-D-xylulose 5-phosphate: step 6/6. Its function is as follows. Catalyzes the conversion of 1-hydroxy-2-methyl-2-(E)-butenyl 4-diphosphate (HMBPP) into a mixture of isopentenyl diphosphate (IPP) and dimethylallyl diphosphate (DMAPP). Acts in the terminal step of the DOXP/MEP pathway for isoprenoid precursor biosynthesis. The chain is 4-hydroxy-3-methylbut-2-enyl diphosphate reductase from Agrobacterium fabrum (strain C58 / ATCC 33970) (Agrobacterium tumefaciens (strain C58)).